We begin with the raw amino-acid sequence, 38 residues long: Photosystem II reaction center protein L (38 aa).

The helical transmembrane segment at 17–37 threads the bilayer; it reads SLYWGLLLIFVLAVLFSSYFF.

It belongs to the PsbL family. PSII is composed of 1 copy each of membrane proteins PsbA, PsbB, PsbC, PsbD, PsbE, PsbF, PsbH, PsbI, PsbJ, PsbK, PsbL, PsbM, PsbT, PsbX, PsbY, PsbZ, Psb30/Ycf12, at least 3 peripheral proteins of the oxygen-evolving complex and a large number of cofactors. It forms dimeric complexes.

It is found in the plastid. It localises to the chloroplast thylakoid membrane. In terms of biological role, one of the components of the core complex of photosystem II (PSII). PSII is a light-driven water:plastoquinone oxidoreductase that uses light energy to abstract electrons from H(2)O, generating O(2) and a proton gradient subsequently used for ATP formation. It consists of a core antenna complex that captures photons, and an electron transfer chain that converts photonic excitation into a charge separation. This subunit is found at the monomer-monomer interface and is required for correct PSII assembly and/or dimerization. This Ephedra sinica (Chinese ephedra) protein is Photosystem II reaction center protein L.